A 1066-amino-acid chain; its full sequence is DNA-directed RNA polymerase subunit beta (1066 aa).

The protein belongs to the RNA polymerase beta chain family. In plastids the minimal PEP RNA polymerase catalytic core is composed of four subunits: alpha, beta, beta', and beta''. When a (nuclear-encoded) sigma factor is associated with the core the holoenzyme is formed, which can initiate transcription.

Its subcellular location is the plastid. It is found in the chloroplast. The enzyme catalyses RNA(n) + a ribonucleoside 5'-triphosphate = RNA(n+1) + diphosphate. Functionally, DNA-dependent RNA polymerase catalyzes the transcription of DNA into RNA using the four ribonucleoside triphosphates as substrates. In Coffea arabica (Arabian coffee), this protein is DNA-directed RNA polymerase subunit beta.